The primary structure comprises 255 residues: Proteasome subunit alpha 2 (255 aa).

The disordered stretch occupies residues 229-255; sequence AGSSLEEMLPTPAATEDAPPANGDAPS. Low complexity predominate over residues 238–249; sequence PTPAATEDAPPA.

It belongs to the peptidase T1A family. As to quaternary structure, the 20S proteasome core is composed of 14 alpha and 14 beta subunits that assemble into four stacked heptameric rings, resulting in a barrel-shaped structure. The two inner rings, each composed of seven catalytic beta subunits, are sandwiched by two outer rings, each composed of seven alpha subunits. All four combinations of alpha- and beta-subunits (beta2-alpha1, beta2-alpha2, beta1-alpha2 and beta1-alpha1) yield fully assembled and proteolytically active proteasomes. The catalytic chamber with the active sites is on the inside of the barrel. Has probably a gated structure, the ends of the cylinder being occluded by the N-termini of the alpha-subunits. Is likely capped by the proteasome-associated ATPase, ARC. The N-terminus is blocked.

The protein localises to the cytoplasm. The protein operates within protein degradation; proteasomal Pup-dependent pathway. Its activity is regulated as follows. The formation of the proteasomal ATPase ARC-20S proteasome complex, likely via the docking of the C-termini of ARC into the intersubunit pockets in the alpha-rings, may trigger opening of the gate for substrate entry. Interconversion between the open-gate and close-gate conformations leads to a dynamic regulation of the 20S proteasome proteolysis activity. Its function is as follows. Component of the proteasome core, a large protease complex with broad specificity involved in protein degradation. The R.erythropolis proteasomes are able to cleave oligopeptides after Tyr, Phe and Leu, very poorly after Arg but not after Glu. Thus, displays chymotrypsin-like activity, low trypsin-like activity but no caspase-like activity. This is Proteasome subunit alpha 2 from Rhodococcus erythropolis (Arthrobacter picolinophilus).